A 258-amino-acid chain; its full sequence is Alpha-fibrinogenase-like (258 aa).

The signal sequence occupies residues 1-18; sequence MVLIRVLANLLVLQLSYA. A propeptide spanning residues 19-24 is cleaved from the precursor; sequence QKSSEL. The Peptidase S1 domain occupies 25-249; that stretch reads VVGGHPCNIY…YTDWIHSIIA (225 aa). 6 disulfides stabilise this stretch: C31–C163, C50–C66, C98–C256, C142–C210, C174–C189, and C200–C225. N44 carries N-linked (GlcNAc...) asparagine glycosylation. Catalysis depends on charge relay system residues H65 and D110. The Charge relay system role is filled by S204.

This sequence belongs to the peptidase S1 family. Snake venom subfamily. Monomer. As to expression, expressed by the venom gland.

It localises to the secreted. Degrades alpha chain of fibrinogen (FGA), and has strong caseinolytic activity. Cleaves oxidized insulin B-chain at '40-Tyr-|-Leu-41', '48-Phe-|-Phe-49' and '49-Phe-|-Tyr-50', and glucagon at the bonds '62-Tyr-|-Ser-63', 66-Leu-|-Asp-67' and '78-Leu-|-Met-79' bonds. The polypeptide is Alpha-fibrinogenase-like (Daboia siamensis (Eastern Russel's viper)).